Here is a 158-residue protein sequence, read N- to C-terminus: Glycine/sarcosine/betaine reductase complex component A1 (158 aa).

The active site involves Sec-44. Position 44 (Sec-44) is a non-standard amino acid, selenocysteine.

It belongs to the GrdA family. In terms of assembly, monomer. Component of the glycine, sarcosine and betaine reductase complexes, together with components B and C.

The catalysed reaction is acetyl phosphate + [thioredoxin]-disulfide + NH4(+) + H2O = [thioredoxin]-dithiol + glycine + phosphate + H(+). It carries out the reaction acetyl phosphate + methylamine + [thioredoxin]-disulfide + H2O = sarcosine + [thioredoxin]-dithiol + phosphate + H(+). The enzyme catalyses acetyl phosphate + trimethylamine + [thioredoxin]-disulfide + H2O = glycine betaine + [thioredoxin]-dithiol + phosphate + H(+). Its function is as follows. In the first step of glycine, betaine and sarcosine reductases, the substrate is bound to component PB via a Schiff base intermediate. Then the PB-activated substrate is nucleophilically attacked by the selenol anion of component PA to transform it to a carboxymethylated selenoether and the respective amine. By action of component PC, acetyl phosphate is formed, leaving component PA in its oxidized state. Finally component PA becomes reduced by the thioredoxin system to start a new catalytic cycle of reductive deamination. The protein is Glycine/sarcosine/betaine reductase complex component A1 (grdA1) of Peptoclostridium acidaminophilum (Eubacterium acidaminophilum).